Reading from the N-terminus, the 95-residue chain is Aspartyl/glutamyl-tRNA(Asn/Gln) amidotransferase subunit C (95 aa).

It belongs to the GatC family. Heterotrimer of A, B and C subunits.

The enzyme catalyses L-glutamyl-tRNA(Gln) + L-glutamine + ATP + H2O = L-glutaminyl-tRNA(Gln) + L-glutamate + ADP + phosphate + H(+). It catalyses the reaction L-aspartyl-tRNA(Asn) + L-glutamine + ATP + H2O = L-asparaginyl-tRNA(Asn) + L-glutamate + ADP + phosphate + 2 H(+). Allows the formation of correctly charged Asn-tRNA(Asn) or Gln-tRNA(Gln) through the transamidation of misacylated Asp-tRNA(Asn) or Glu-tRNA(Gln) in organisms which lack either or both of asparaginyl-tRNA or glutaminyl-tRNA synthetases. The reaction takes place in the presence of glutamine and ATP through an activated phospho-Asp-tRNA(Asn) or phospho-Glu-tRNA(Gln). In Acidiphilium cryptum (strain JF-5), this protein is Aspartyl/glutamyl-tRNA(Asn/Gln) amidotransferase subunit C.